Consider the following 231-residue polypeptide: 7-cyano-7-deazaguanine synthase (231 aa).

8 to 18 serves as a coordination point for ATP; the sequence is FSGGQDSTTCL. Residues Cys188, Cys197, Cys200, and Cys203 each coordinate Zn(2+).

The protein belongs to the QueC family. Zn(2+) is required as a cofactor.

The catalysed reaction is 7-carboxy-7-deazaguanine + NH4(+) + ATP = 7-cyano-7-deazaguanine + ADP + phosphate + H2O + H(+). It functions in the pathway purine metabolism; 7-cyano-7-deazaguanine biosynthesis. Catalyzes the ATP-dependent conversion of 7-carboxy-7-deazaguanine (CDG) to 7-cyano-7-deazaguanine (preQ(0)). The sequence is that of 7-cyano-7-deazaguanine synthase from Pectobacterium carotovorum subsp. carotovorum (strain PC1).